The sequence spans 398 residues: Apolipoprotein L1 (398 aa).

A signal peptide spans 1–27 (MEGAALLRVSVLCIWMSALFLGVGVRA). The span at 35-47 (QQNVPSGTDTGDP) shows a compositional bias: polar residues. The tract at residues 35 to 55 (QQNVPSGTDTGDPQSKPLGDW) is disordered. Residue N261 is glycosylated (N-linked (GlcNAc...) asparagine). The interval 297 to 317 (PHASASRPRVTEPISAESGEQ) is disordered. Residues S311 and S314 each carry the phosphoserine; by FAM20C modification.

This sequence belongs to the apolipoprotein L family. As to quaternary structure, in plasma, interacts with APOA1 and mainly associated with large high density lipoprotein particles. Post-translationally, phosphorylated by FAM20C in the extracellular medium. Plasma. Found on APOA-I-containing high density lipoprotein (HDL3). Expressed in pancreas, lung, prostate, liver, placenta and spleen.

Its subcellular location is the secreted. May play a role in lipid exchange and transport throughout the body. May participate in reverse cholesterol transport from peripheral cells to the liver. This is Apolipoprotein L1 (APOL1) from Homo sapiens (Human).